Reading from the N-terminus, the 638-residue chain is Mediator of RNA polymerase II transcription subunit 17 (638 aa).

The interval M1 to P21 is disordered.

Belongs to the Mediator complex subunit 17 family. In terms of assembly, component of the Mediator complex.

Its subcellular location is the nucleus. Its function is as follows. Component of the Mediator complex, a coactivator involved in the regulated transcription of nearly all RNA polymerase II-dependent genes. Mediator functions as a bridge to convey information from gene-specific regulatory proteins to the basal RNA polymerase II transcription machinery. Mediator is recruited to promoters by direct interactions with regulatory proteins and serves as a scaffold for the assembly of a functional preinitiation complex with RNA polymerase II and the general transcription factors. The polypeptide is Mediator of RNA polymerase II transcription subunit 17 (srb4) (Aspergillus oryzae (strain ATCC 42149 / RIB 40) (Yellow koji mold)).